The sequence spans 72 residues: Large ribosomal subunit protein uL29 (72 aa).

The protein belongs to the universal ribosomal protein uL29 family.

In Treponema pallidum (strain Nichols), this protein is Large ribosomal subunit protein uL29 (rpmC).